We begin with the raw amino-acid sequence, 664 residues long: Prelamin-A/C (664 aa).

Residue M1 is modified to N-acetylmethionine. Residues 1-24 (METPSQRRATRSGAQASSTPLSPT) are disordered. Positions 1–33 (METPSQRRATRSGAQASSTPLSPTRITRLQEKE) are head. The segment at 1-130 (METPSQRRAT…TKKEGDLMAA (130 aa)) is interaction with MLIP. Position 3 is a phosphothreonine (T3). At S5 the chain carries Phosphoserine. T10 bears the Phosphothreonine mark. A phosphoserine mark is found at S12 and S18. The residue at position 19 (T19) is a Phosphothreonine. The residue at position 22 (S22) is a Phosphoserine. The 357-residue stretch at 31–387 (EKEDLQELND…KLLEGEEERL (357 aa)) folds into the IF rod domain. K32 is modified (N6-acetyllysine; alternate). K32 is subject to N6-succinyllysine; alternate. K32 is covalently cross-linked (Glycyl lysine isopeptide (Lys-Gly) (interchain with G-Cter in SUMO2); alternate). Residues 34 to 70 (DLQELNDRLAVYIDRVRSLETENAGLRLRITESEEVV) form a coil 1A region. Residues S51, S66, and S71 each carry the phosphoserine modification. Residues 71–80 (SREVSGIKSA) are linker 1. Residues K78 and K97 each carry the N6-acetyllysine modification. A coil 1B region spans residues 81–218 (YEAELGDARK…NIYSEELRET (138 aa)). Residue K97 forms a Glycyl lysine isopeptide (Lys-Gly) (interchain with G-Cter in SUMO2) linkage. A Phosphoserine modification is found at S107. An N6-acetyllysine mark is found at K108, K114, K123, K135, K144, and K155. K171 is subject to N6-acetyllysine; alternate. Position 171 is an N6-succinyllysine; alternate (K171). K171 is covalently cross-linked (Glycyl lysine isopeptide (Lys-Gly) (interchain with G-Cter in SUMO2); alternate). An N6-acetyllysine mark is found at K180, K201, and K208. K201 is covalently cross-linked (Glycyl lysine isopeptide (Lys-Gly) (interchain with G-Cter in SUMO2); alternate). K201 participates in a covalent cross-link: Glycyl lysine isopeptide (Lys-Gly) (interchain with G-Cter in SUMO); alternate. Residue K208 forms a Glycyl lysine isopeptide (Lys-Gly) (interchain with G-Cter in SUMO2) linkage. S212 carries the phosphoserine modification. Residues K219 and K233 each participate in a glycyl lysine isopeptide (Lys-Gly) (interchain with G-Cter in SUMO2) cross-link. The linker 2 stretch occupies residues 219-242 (KRRHETRLVEIDNGKQREFESRLA). 4 positions are modified to N6-acetyllysine: K233, K260, K265, and K270. A coil 2 region spans residues 243-383 (DALQDLRAQH…HAYRKLLEGE (141 aa)). K260 is covalently cross-linked (Glycyl lysine isopeptide (Lys-Gly) (interchain with G-Cter in SUMO2); alternate). A Glycyl lysine isopeptide (Lys-Gly) (interchain with G-Cter in SUMO2); alternate cross-link involves residue K270. Phosphoserine occurs at positions 277, 282, 301, and 307. K311 is covalently cross-linked (Glycyl lysine isopeptide (Lys-Gly) (interchain with G-Cter in SUMO2); alternate). 3 positions are modified to N6-acetyllysine: K311, K316, and K341. Residues K366 and K378 each participate in a glycyl lysine isopeptide (Lys-Gly) (interchain with G-Cter in SUMO2) cross-link. A disordered region spans residues 384-442 (EERLRLSPSPTSQRSRGRASSHSSQTQSGGSVTKKRKLESSESRSSFSQHARTSGRVAV). A tail region spans residues 384 to 664 (EERLRLSPSP…TQSPQNCSIM (281 aa)). S390, S392, S395, S398, S403, S404, S406, S407, and S414 each carry phosphoserine. The segment covering 403–414 (SSHSSQTQSGGS) has biased composition (low complexity). T416 carries the post-translational modification Phosphothreonine. The residue at position 417 (K417) is an N6-acetyllysine. Residues K417 and K420 each participate in a glycyl lysine isopeptide (Lys-Gly) (interchain with G-Cter in SUMO2) cross-link. A Nuclear localization signal motif is present at residues 417 to 422 (KKRKLE). Phosphoserine is present on residues S423, S426, S429, and S431. In terms of domain architecture, LTD spans 428–545 (SSFSQHARTS…EEVAMRKLVR (118 aa)). K450 is covalently cross-linked (Glycyl lysine isopeptide (Lys-Gly) (interchain with G-Cter in SUMO2); alternate). K450 and K457 each carry N6-acetyllysine. Residues S458 and S463 each carry the phosphoserine modification. Residues K470 and K486 each participate in a glycyl lysine isopeptide (Lys-Gly) (interchain with G-Cter in SUMO2) cross-link. K486 carries the post-translational modification N6-acetyllysine. Residues T496 and T505 each carry the phosphothreonine modification. Phosphoserine is present on residues S533 and S546. T548 carries the post-translational modification Phosphothreonine. The disordered stretch occupies residues 555–577 (DEDGDDLLHHHHGSHGSSSGDPA). S568 and S571 each carry phosphoserine. A Glycyl lysine isopeptide (Lys-Gly) (interchain with G-Cter in SUMO2); alternate cross-link involves residue K597. K597 participates in a covalent cross-link: Glycyl lysine isopeptide (Lys-Gly) (interchain with G-Cter in SUMO1); alternate. The tract at residues 598-620 (ASASSSGAQVGGSISSGSSASSV) is disordered. A phosphoserine mark is found at S612, S613, S616, and S619. 2 O-linked (GlcNAc) serine glycosylation sites follow: S625 and S628. Phosphoserine occurs at positions 628, 632, and 636. Residues 647 to 661 (LLGNSRPRTQSPQNC) constitute a propeptide, removed in Lamin-A/C form. C661 carries the cysteine methyl ester modification. The S-farnesyl cysteine moiety is linked to residue C661. Residues 662 to 664 (SIM) constitute a propeptide, removed in Prelamin-A/C form and in Lamin-A/C form.

Belongs to the intermediate filament family. In terms of assembly, homodimer of lamin A and lamin C. Lamin dimers then assemble into dimeric head-to-tail polymers. Ultimately, two head-to-tail polymers assemble laterally into a protofilament with a uniformly shaped rod of 3.5 nm in diameter. Interacts with lamin-associated polypeptides IA, IB and TMPO-alpha, RB1 and with emerin. Interacts with SREBF1, SREBF2, SUN2 and TMEM43. Interacts with TMEM201. Proteolytically processed isoform A interacts with NARF. Interacts with SUN1. Interacts with MLIP. Interacts with DMPK; may regulate nuclear envelope stability. Interacts with SUV39H1; the interaction increases stability of SUV39H1. Interacts with SYNE2. Interacts with ITSN1 isoform 2. Interacts with IFFO1; enables the formation of an interior nucleoskeleton that is recruited to DNA double-strand breaks. Interacts with EMD. As to quaternary structure, interacts (via C-terminus) with LEMD2 (via N-terminus) (in vitro). In terms of processing, proteolytic cleavage of the C-terminal of 18 residues of prelamin-A/C results in the production of lamin-A/C. The prelamin-A/C maturation pathway includes farnesylation of CAAX motif by protein farnesyltransferase (FNTA and FNTB), removal of the last three amino acids (-AAX) by RCE1/FACE2 and/or ZMPSTE24, methylation of the C-terminal cysteine by ICMT and endoproteolytic removal of the last 15 C-terminal amino acids by ZMPSTE24. Proteolytic cleavage requires prior farnesylation and methylation, and absence of these blocks cleavage. Post-translationally, farnesylation of prelamin-A/C facilitates nuclear envelope targeting. Phosphorylation plays a key role in lamin organization, subcellular localization and nuclear envelope disintegration. Phosphorylation by CDK1 at Ser-22 and Ser-392 at the onset of mitosis drives lamin disassembly and nuclear envelope breakdown. Phosphorylation at Ser-22 and Ser-392 during interphase promotes localization to the nucleoplasm and regulates lamina assembly. Phosphorylation at Ser-22, Ser-392 and Ser-628 during interphase causes redistribution between the nucleus and the cytoplasm. Phosphorylation at Ser-22 by CDK1 regulates matrix stiffness. Phosphorylation status of Ser-22 determines its localization between double-strand break (DSB) sites and the nuclear matrix. Phosphorylated by ATR at Ser-282 in response to DNA damage, leading to lamin disassembly and nuclear envelope rupture. Phosphorylation also regulates stability in micronuclei arising from genome instability: phosphorylation at Ser-395 by ATR in response to genome instability and double-stranded DNA breaks primes LMNA for subsequent phosphorylation at Ser-392 by CDK1 and micronuclei envelope rupture. The rupture of micronuclear envelope triggers the cGAS-STING pathway thereby activating the type I interferon response and innate immunity. In terms of processing, acetylation by KAT8 is required for nuclear architecture. Post-translationally, sumoylation is necessary for the localization to the nuclear envelope.

The protein localises to the nucleus lamina. It localises to the nucleus envelope. The protein resides in the nucleus. Its subcellular location is the nucleoplasm. It is found in the nucleus matrix. Its function is as follows. Lamins are intermediate filament proteins that assemble into a filamentous meshwork, and which constitute the major components of the nuclear lamina, a fibrous layer on the nucleoplasmic side of the inner nuclear membrane. Lamins provide a framework for the nuclear envelope, bridging the nuclear envelope and chromatin, thereby playing an important role in nuclear assembly, chromatin organization, nuclear membrane and telomere dynamics. Lamin A and C also regulate matrix stiffness by conferring nuclear mechanical properties. The structural integrity of the lamina is strictly controlled by the cell cycle, as seen by the disintegration and formation of the nuclear envelope in prophase and telophase, respectively. Lamin A and C are present in equal amounts in the lamina of mammals. Also invoved in DNA repair: recruited by DNA repair proteins XRCC4 and IFFO1 to the DNA double-strand breaks (DSBs) to prevent chromosome translocation by immobilizing broken DNA ends. Required for normal development of peripheral nervous system and skeletal muscle and for muscle satellite cell proliferation. Required for osteoblastogenesis and bone formation. Also prevents fat infiltration of muscle and bone marrow, helping to maintain the volume and strength of skeletal muscle and bone. Required for cardiac homeostasis. In terms of biological role, prelamin-A/C can accelerate smooth muscle cell senescence. It acts to disrupt mitosis and induce DNA damage in vascular smooth muscle cells (VSMCs), leading to mitotic failure, genomic instability, and premature senescence. The sequence is that of Prelamin-A/C (LMNA) from Sus scrofa (Pig).